The sequence spans 517 residues: Crotonobetaine/carnitine--CoA ligase (517 aa).

This sequence belongs to the ATP-dependent AMP-binding enzyme family.

The enzyme catalyses 4-(trimethylamino)butanoate + ATP + CoA = 4-(trimethylamino)butanoyl-CoA + AMP + diphosphate. It catalyses the reaction crotonobetaine + ATP + CoA = crotonobetainyl-CoA + AMP + diphosphate. It carries out the reaction (R)-carnitine + ATP + CoA = (R)-carnitinyl-CoA + AMP + diphosphate. It functions in the pathway amine and polyamine metabolism; carnitine metabolism. Catalyzes the transfer of CoA to carnitine, generating the initial carnitinyl-CoA needed for the CaiB reaction cycle. Also has activity toward crotonobetaine and gamma-butyrobetaine. This chain is Crotonobetaine/carnitine--CoA ligase, found in Salmonella choleraesuis (strain SC-B67).